The sequence spans 105 residues: MAAKIRRNDEVIVLAGKDKGKKGKVTKVLATGKVIVEGINLVKKHQKPVPALGIQGGIVEQEAAIDVSNVAIFNAATGKADRIGFRFEDGKKVRFFKSNGETVSN.

It belongs to the universal ribosomal protein uL24 family. In terms of assembly, part of the 50S ribosomal subunit.

One of two assembly initiator proteins, it binds directly to the 5'-end of the 23S rRNA, where it nucleates assembly of the 50S subunit. In terms of biological role, one of the proteins that surrounds the polypeptide exit tunnel on the outside of the subunit. This Vibrio parahaemolyticus serotype O3:K6 (strain RIMD 2210633) protein is Large ribosomal subunit protein uL24.